The sequence spans 137 residues: Large ribosomal subunit protein uL16c (137 aa).

It belongs to the universal ribosomal protein uL16 family. Part of the 50S ribosomal subunit.

It localises to the plastid. The protein localises to the chloroplast. This chain is Large ribosomal subunit protein uL16c, found in Bigelowiella natans (Pedinomonas minutissima).